The chain runs to 267 residues: Sepiapterin reductase (267 aa).

An N-acetylmethionine modification is found at M1. 20–26 (GASRGFG) is a binding site for NADP(+). Position 38 is a phosphoserine (S38). NADP(+) is bound by residues 48–49 (RN) and 75–76 (DL). Residues 163 to 164 (SI) and Y176 each bind substrate. K180 is a binding site for NADP(+). The residue at position 201 (S201) is a Phosphoserine. G205 is a binding site for substrate. 207-212 (LDTDMQ) contacts NADP(+). S219 is subject to Phosphoserine. D263 serves as a coordination point for substrate.

Belongs to the sepiapterin reductase family. In terms of assembly, homodimer.

It localises to the cytoplasm. The enzyme catalyses L-erythro-7,8-dihydrobiopterin + NADP(+) = L-sepiapterin + NADPH + H(+). The catalysed reaction is (6R)-L-erythro-5,6,7,8-tetrahydrobiopterin + 2 NADP(+) = 6-pyruvoyl-5,6,7,8-tetrahydropterin + 2 NADPH + 2 H(+). Its function is as follows. Catalyzes the final one or two reductions in tetra-hydrobiopterin biosynthesis to form 5,6,7,8-tetrahydrobiopterin. The sequence is that of Sepiapterin reductase (SPR) from Bos taurus (Bovine).